We begin with the raw amino-acid sequence, 275 residues long: Shikimate dehydrogenase (NADP(+)) (275 aa).

Shikimate-binding positions include 17-19 (SKS) and T64. Catalysis depends on K68, which acts as the Proton acceptor. E80 lines the NADP(+) pocket. Shikimate contacts are provided by N89 and D105. NADP(+) contacts are provided by residues 129–133 (GAGGA), 152–157 (NRTFFK), and M216. A shikimate-binding site is contributed by Y218. Residue G240 participates in NADP(+) binding.

This sequence belongs to the shikimate dehydrogenase family. In terms of assembly, homodimer.

It carries out the reaction shikimate + NADP(+) = 3-dehydroshikimate + NADPH + H(+). The protein operates within metabolic intermediate biosynthesis; chorismate biosynthesis; chorismate from D-erythrose 4-phosphate and phosphoenolpyruvate: step 4/7. Functionally, involved in the biosynthesis of the chorismate, which leads to the biosynthesis of aromatic amino acids. Catalyzes the reversible NADPH linked reduction of 3-dehydroshikimate (DHSA) to yield shikimate (SA). The sequence is that of Shikimate dehydrogenase (NADP(+)) from Pectobacterium atrosepticum (strain SCRI 1043 / ATCC BAA-672) (Erwinia carotovora subsp. atroseptica).